Consider the following 143-residue polypeptide: Small ribosomal subunit protein uS12 (143 aa).

The span at 1–20 (MGKPRGLRTARKHRSHRRDQ) shows a compositional bias: basic residues. The segment at 1-26 (MGKPRGLRTARKHRSHRRDQRWHDKD) is disordered. Hydroxyproline is present on Pro-62.

The protein belongs to the universal ribosomal protein uS12 family. In terms of assembly, component of the 40S small ribosomal subunit.

Its subcellular location is the cytoplasm. It is found in the cytosol. It localises to the rough endoplasmic reticulum. In Dermacentor variabilis (American dog tick), this protein is Small ribosomal subunit protein uS12 (RpS23).